The sequence spans 137 residues: Bombinin-like peptides 2 (137 aa).

The N-terminal stretch at 1–18 (MNFKYIVAVSILIASAYA) is a signal peptide. Asparagine amide is present on Asn70. Positions 92-112 (DSLEHPEEASEKETRGFNQEE) are disordered. Ile136 bears the Isoleucine amide mark.

The protein belongs to the bombinin family. Expressed by the skin glands.

It is found in the secreted. Bombinin-like peptide 2 has antimicrobial activity, but no hemolytic activity. Preliminary evidence indicates that this peptide does not lyse and thus kill the bacteria by its antimicrobial activity. Functionally, bombinin H2 has antibacterial and hemolytic activity. This is Bombinin-like peptides 2 from Bombina variegata (Yellow-bellied toad).